The primary structure comprises 96 residues: Co-chaperonin GroES 2 (96 aa).

It belongs to the GroES chaperonin family. In terms of assembly, heptamer of 7 subunits arranged in a ring. Interacts with the chaperonin GroEL.

It localises to the cytoplasm. Together with the chaperonin GroEL, plays an essential role in assisting protein folding. The GroEL-GroES system forms a nano-cage that allows encapsulation of the non-native substrate proteins and provides a physical environment optimized to promote and accelerate protein folding. GroES binds to the apical surface of the GroEL ring, thereby capping the opening of the GroEL channel. This Vibrio cholerae serotype O1 (strain ATCC 39315 / El Tor Inaba N16961) protein is Co-chaperonin GroES 2.